The primary structure comprises 238 residues: Ribonuclease PH (238 aa).

Phosphate is bound by residues R86 and 124–126 (GTR).

This sequence belongs to the RNase PH family. As to quaternary structure, homohexameric ring arranged as a trimer of dimers.

It carries out the reaction tRNA(n+1) + phosphate = tRNA(n) + a ribonucleoside 5'-diphosphate. Its function is as follows. Phosphorolytic 3'-5' exoribonuclease that plays an important role in tRNA 3'-end maturation. Removes nucleotide residues following the 3'-CCA terminus of tRNAs; can also add nucleotides to the ends of RNA molecules by using nucleoside diphosphates as substrates, but this may not be physiologically important. Probably plays a role in initiation of 16S rRNA degradation (leading to ribosome degradation) during starvation. This chain is Ribonuclease PH, found in Solibacter usitatus (strain Ellin6076).